Here is a 339-residue protein sequence, read N- to C-terminus: Ketol-acid reductoisomerase (NADP(+)) (339 aa).

One can recognise a KARI N-terminal Rossmann domain in the interval 1–182 (MRVYYDRDAD…GGGRSGIIET (182 aa)). NADP(+) contacts are provided by residues 24-27 (YGSQ), R48, S51, T53, and 83-86 (DELQ). Residue H108 is part of the active site. G134 provides a ligand contact to NADP(+). The region spanning 183-328 (SFREECETDL…EKLRAMMPWI (146 aa)) is the KARI C-terminal knotted domain. Mg(2+)-binding residues include D191, E195, E227, and E231. S252 is a substrate binding site.

Belongs to the ketol-acid reductoisomerase family. It depends on Mg(2+) as a cofactor.

It carries out the reaction (2R)-2,3-dihydroxy-3-methylbutanoate + NADP(+) = (2S)-2-acetolactate + NADPH + H(+). The catalysed reaction is (2R,3R)-2,3-dihydroxy-3-methylpentanoate + NADP(+) = (S)-2-ethyl-2-hydroxy-3-oxobutanoate + NADPH + H(+). The protein operates within amino-acid biosynthesis; L-isoleucine biosynthesis; L-isoleucine from 2-oxobutanoate: step 2/4. It participates in amino-acid biosynthesis; L-valine biosynthesis; L-valine from pyruvate: step 2/4. Involved in the biosynthesis of branched-chain amino acids (BCAA). Catalyzes an alkyl-migration followed by a ketol-acid reduction of (S)-2-acetolactate (S2AL) to yield (R)-2,3-dihydroxy-isovalerate. In the isomerase reaction, S2AL is rearranged via a Mg-dependent methyl migration to produce 3-hydroxy-3-methyl-2-ketobutyrate (HMKB). In the reductase reaction, this 2-ketoacid undergoes a metal-dependent reduction by NADPH to yield (R)-2,3-dihydroxy-isovalerate. The sequence is that of Ketol-acid reductoisomerase (NADP(+)) from Paramagnetospirillum magneticum (strain ATCC 700264 / AMB-1) (Magnetospirillum magneticum).